The following is a 519-amino-acid chain: ATP synthase subunit beta, mitochondrial (519 aa).

An ATP-binding site is contributed by 195–202; the sequence is GGAGVGKT.

It belongs to the ATPase alpha/beta chains family. In terms of assembly, F-type ATPases have 2 components, CF(1) - the catalytic core - and CF(0) - the membrane proton channel. CF(1) has five subunits: alpha(3), beta(3), gamma(1), delta(1), epsilon(1). CF(0) has three main subunits: a, b and c.

The protein localises to the mitochondrion. It is found in the mitochondrion inner membrane. The catalysed reaction is ATP + H2O + 4 H(+)(in) = ADP + phosphate + 5 H(+)(out). Its function is as follows. Mitochondrial membrane ATP synthase (F(1)F(0) ATP synthase or Complex V) produces ATP from ADP in the presence of a proton gradient across the membrane which is generated by electron transport complexes of the respiratory chain. F-type ATPases consist of two structural domains, F(1) - containing the extramembraneous catalytic core, and F(0) - containing the membrane proton channel, linked together by a central stalk and a peripheral stalk. During catalysis, ATP synthesis in the catalytic domain of F(1) is coupled via a rotary mechanism of the central stalk subunits to proton translocation. Subunits alpha and beta form the catalytic core in F(1). Rotation of the central stalk against the surrounding alpha(3)beta(3) subunits leads to hydrolysis of ATP in three separate catalytic sites on the beta subunits. This chain is ATP synthase subunit beta, mitochondrial (atp-2), found in Neurospora crassa (strain ATCC 24698 / 74-OR23-1A / CBS 708.71 / DSM 1257 / FGSC 987).